Consider the following 156-residue polypeptide: ATP synthase subunit b (156 aa).

A helical membrane pass occupies residues 12–32; the sequence is VAFLIFVLFCMKFIWPPVIAA.

This sequence belongs to the ATPase B chain family. F-type ATPases have 2 components, F(1) - the catalytic core - and F(0) - the membrane proton channel. F(1) has five subunits: alpha(3), beta(3), gamma(1), delta(1), epsilon(1). F(0) has three main subunits: a(1), b(2) and c(10-14). The alpha and beta chains form an alternating ring which encloses part of the gamma chain. F(1) is attached to F(0) by a central stalk formed by the gamma and epsilon chains, while a peripheral stalk is formed by the delta and b chains.

The protein resides in the cell inner membrane. F(1)F(0) ATP synthase produces ATP from ADP in the presence of a proton or sodium gradient. F-type ATPases consist of two structural domains, F(1) containing the extramembraneous catalytic core and F(0) containing the membrane proton channel, linked together by a central stalk and a peripheral stalk. During catalysis, ATP synthesis in the catalytic domain of F(1) is coupled via a rotary mechanism of the central stalk subunits to proton translocation. Functionally, component of the F(0) channel, it forms part of the peripheral stalk, linking F(1) to F(0). The polypeptide is ATP synthase subunit b (Pseudomonas fluorescens (strain ATCC BAA-477 / NRRL B-23932 / Pf-5)).